We begin with the raw amino-acid sequence, 274 residues long: Kit ligand (274 aa).

Residues 1 to 25 (MKKTQTWIITCIYLQLLLFNPLVRT) form the signal peptide. Over 26–215 (KGICRNRVTD…ANPLGDSNLQ (190 aa)) the chain is Extracellular. Disulfide bonds link Cys-29–Cys-114 and Cys-68–Cys-164. Residues Asn-90, Asn-97, Asn-145, and Asn-196 are each glycosylated (N-linked (GlcNAc...) asparagine). Residues 216–238 (WAAMALPAFFSLVIGFAFGALYW) traverse the membrane as a helical segment. Residues 239–274 (KKKQPNLTRTAENIQINEEDNEISMLQEKEREFQEV) are Cytoplasmic-facing.

This sequence belongs to the SCF family. In terms of assembly, homodimer, non-covalently linked. Heterotetramer with KIT, binding two KIT molecules; thereby mediates KIT dimerization and subsequent activation by autophosphorylation. In terms of processing, a soluble form is produced by proteolytic processing of isoform 1 in the extracellular domain.

The protein resides in the cytoplasm. Its subcellular location is the cytoskeleton. It localises to the cell membrane. It is found in the cell projection. The protein localises to the lamellipodium. The protein resides in the filopodium. Its subcellular location is the secreted. Functionally, ligand for the receptor-type protein-tyrosine kinase KIT. Plays an essential role in the regulation of cell survival and proliferation, hematopoiesis, stem cell maintenance, gametogenesis, mast cell development, migration and function, and in melanogenesis. KITLG/SCF binding can activate several signaling pathways. Promotes phosphorylation of PIK3R1, the regulatory subunit of phosphatidylinositol 3-kinase, and subsequent activation of the kinase AKT1. KITLG/SCF and KIT also transmit signals via GRB2 and activation of RAS, RAF1 and the MAP kinases MAPK1/ERK2 and/or MAPK3/ERK1. KITLG/SCF and KIT promote activation of STAT family members STAT1, STAT3 and STAT5. KITLG/SCF and KIT promote activation of PLCG1, leading to the production of the cellular signaling molecules diacylglycerol and inositol 1,4,5-trisphosphate. KITLG/SCF acts synergistically with other cytokines, probably interleukins. This chain is Kit ligand (KITLG), found in Neovison vison (American mink).